A 462-amino-acid polypeptide reads, in one-letter code: Trigger factor (462 aa).

The PPIase FKBP-type domain occupies 163 to 259; the sequence is TDYVNIDLQR…VNDVKRRDLP (97 aa). The tract at residues 439 to 462 is disordered; sequence SREEFEEEMQQQQQQQAQRQRMAP. The segment covering 448-462 has biased composition (low complexity); it reads QQQQQQQAQRQRMAP.

It belongs to the FKBP-type PPIase family. Tig subfamily.

The protein localises to the cytoplasm. The enzyme catalyses [protein]-peptidylproline (omega=180) = [protein]-peptidylproline (omega=0). Functionally, involved in protein export. Acts as a chaperone by maintaining the newly synthesized protein in an open conformation. Functions as a peptidyl-prolyl cis-trans isomerase. The protein is Trigger factor of Salinibacter ruber (strain DSM 13855 / M31).